The primary structure comprises 381 residues: Lipid-A-disaccharide synthase (381 aa).

Belongs to the LpxB family.

It catalyses the reaction a lipid X + a UDP-2-N,3-O-bis[(3R)-3-hydroxyacyl]-alpha-D-glucosamine = a lipid A disaccharide + UDP + H(+). The protein operates within bacterial outer membrane biogenesis; LPS lipid A biosynthesis. Functionally, condensation of UDP-2,3-diacylglucosamine and 2,3-diacylglucosamine-1-phosphate to form lipid A disaccharide, a precursor of lipid A, a phosphorylated glycolipid that anchors the lipopolysaccharide to the outer membrane of the cell. This Solibacter usitatus (strain Ellin6076) protein is Lipid-A-disaccharide synthase.